Consider the following 390-residue polypeptide: Transforming growth factor beta-1 proprotein (390 aa).

The N-terminal stretch at Met-1 to Gly-29 is a signal peptide. The tract at residues Leu-30–Pro-74 is straightjacket domain. The tract at residues Glu-75 to Leu-271 is arm domain. 3 N-linked (GlcNAc...) asparagine glycosylation sites follow: Asn-82, Asn-136, and Asn-176. The bowtie tail stretch occupies residues Asp-226–Gly-252. Residues Arg-244–Asp-246 carry the Cell attachment site motif. 4 disulfides stabilise this stretch: Cys-285-Cys-294, Cys-293-Cys-356, Cys-322-Cys-387, and Cys-326-Cys-389.

It belongs to the TGF-beta family. Homodimer; disulfide-linked. Interacts with the serine proteases, HTRA1 and HTRA3: the interaction with either inhibits TGFB1-mediated signaling and the HTRA protease activity is required for this inhibition. May interact with THSD4; this interaction may lead to sequestration by FBN1 microfibril assembly and attenuation of TGFB signaling. Interacts with CD109, DPT and ASPN. Interacts with EFEMP2. Interacts with TSKU; the interaction contributes to regulation of the hair cycle. Interacts with TGFBR3. As to quaternary structure, homodimer; disulfide-linked. Interacts with transforming growth factor beta-1 (TGF-beta-1) chain; interaction is non-covalent and maintains TGF-beta-1 in a latent state; each latency-associated peptide (LAP) monomer interacts with TGF-beta-1 in the other monomer. Interacts with LTBP1; leading to regulation of TGF-beta-1 activation. Interacts with LRRC32/GARP; leading to regulation of TGF-beta-1 activation on the surface of activated regulatory T-cells (Tregs). Interacts with LRRC33/NRROS; leading to regulation of TGF-beta-1 activation in macrophages and microglia. Interacts (via cell attachment site) with integrins ITGAV and ITGB6 (ITGAV:ITGB6), leading to release of the active TGF-beta-1. Interacts with NREP; the interaction results in a decrease in TGFB1 autoinduction. Interacts with HSP90AB1; inhibits latent TGFB1 activation. In terms of assembly, homodimer; disulfide-linked. Interacts with TGF-beta receptors (TGFBR1 and TGFBR2), leading to signal transduction. Post-translationally, transforming growth factor beta-1 proprotein: The precursor proprotein is cleaved in the Golgi apparatus by FURIN to form Transforming growth factor beta-1 (TGF-beta-1) and Latency-associated peptide (LAP) chains, which remain non-covalently linked, rendering TGF-beta-1 inactive. In terms of processing, N-glycosylated. Deglycosylation leads to activation of Transforming growth factor beta-1 (TGF-beta-1); mechanisms triggering deglycosylation-driven activation of TGF-beta-1 are however unclear.

It localises to the secreted. The protein resides in the extracellular space. It is found in the extracellular matrix. In terms of biological role, transforming growth factor beta-1 proprotein: Precursor of the Latency-associated peptide (LAP) and Transforming growth factor beta-1 (TGF-beta-1) chains, which constitute the regulatory and active subunit of TGF-beta-1, respectively. Required to maintain the Transforming growth factor beta-1 (TGF-beta-1) chain in a latent state during storage in extracellular matrix. Associates non-covalently with TGF-beta-1 and regulates its activation via interaction with 'milieu molecules', such as LTBP1, LRRC32/GARP and LRRC33/NRROS, that control activation of TGF-beta-1. Interaction with LRRC33/NRROS regulates activation of TGF-beta-1 in macrophages and microglia. Interaction with LRRC32/GARP controls activation of TGF-beta-1 on the surface of activated regulatory T-cells (Tregs). Interaction with integrins (ITGAV:ITGB6 or ITGAV:ITGB8) results in distortion of the Latency-associated peptide chain and subsequent release of the active TGF-beta-1. Functionally, multifunctional protein that regulates the growth and differentiation of various cell types and is involved in various processes, such as normal development, immune function, microglia function and responses to neurodegeneration. Activation into mature form follows different steps: following cleavage of the proprotein in the Golgi apparatus, Latency-associated peptide (LAP) and Transforming growth factor beta-1 (TGF-beta-1) chains remain non-covalently linked rendering TGF-beta-1 inactive during storage in extracellular matrix. At the same time, LAP chain interacts with 'milieu molecules', such as LTBP1, LRRC32/GARP and LRRC33/NRROS that control activation of TGF-beta-1 and maintain it in a latent state during storage in extracellular milieus. TGF-beta-1 is released from LAP by integrins (ITGAV:ITGB6 or ITGAV:ITGB8): integrin-binding to LAP stabilizes an alternative conformation of the LAP bowtie tail and results in distortion of the LAP chain and subsequent release of the active TGF-beta-1. Once activated following release of LAP, TGF-beta-1 acts by binding to TGF-beta receptors (TGFBR1 and TGFBR2), which transduce signal. While expressed by many cells types, TGF-beta-1 only has a very localized range of action within cell environment thanks to fine regulation of its activation by Latency-associated peptide chain (LAP) and 'milieu molecules'. Plays an important role in bone remodeling: acts as a potent stimulator of osteoblastic bone formation, causing chemotaxis, proliferation and differentiation in committed osteoblasts. Can promote either T-helper 17 cells (Th17) or regulatory T-cells (Treg) lineage differentiation in a concentration-dependent manner. At high concentrations, leads to FOXP3-mediated suppression of RORC and down-regulation of IL-17 expression, favoring Treg cell development. At low concentrations in concert with IL-6 and IL-21, leads to expression of the IL-17 and IL-23 receptors, favoring differentiation to Th17 cells. Stimulates sustained production of collagen through the activation of CREB3L1 by regulated intramembrane proteolysis (RIP). Mediates SMAD2/3 activation by inducing its phosphorylation and subsequent translocation to the nucleus. Positively regulates odontoblastic differentiation in dental papilla cells, via promotion of IPO7-mediated translocation of phosphorylated SMAD2 to the nucleus and subsequent transcription of target genes. Can induce epithelial-to-mesenchymal transition (EMT) and cell migration in various cell types. The polypeptide is Transforming growth factor beta-1 proprotein (TGFB1) (Mustela putorius furo (European domestic ferret)).